The sequence spans 511 residues: 2,3-bisphosphoglycerate-independent phosphoglycerate mutase (511 aa).

Positions 18 and 68 each coordinate Mn(2+). The active-site Phosphoserine intermediate is the S68. Residues H129, 159 to 160, R191, K197, 261 to 264, and K329 each bind substrate; these read RD and RSDR. Residues D396, H400, D437, H438, and H459 each coordinate Mn(2+). Positions 442-464 are disordered; that stretch reads ERMTKQAPDGSVRPYGGHTTNPV.

Belongs to the BPG-independent phosphoglycerate mutase family. Monomer. Mn(2+) is required as a cofactor.

It carries out the reaction (2R)-2-phosphoglycerate = (2R)-3-phosphoglycerate. It participates in carbohydrate degradation; glycolysis; pyruvate from D-glyceraldehyde 3-phosphate: step 3/5. Functionally, catalyzes the interconversion of 2-phosphoglycerate and 3-phosphoglycerate. The chain is 2,3-bisphosphoglycerate-independent phosphoglycerate mutase from Streptomyces coelicolor (strain ATCC BAA-471 / A3(2) / M145).